The sequence spans 316 residues: Protease HtpX homolog (316 aa).

Residues 16-36 traverse the membrane as a helical segment; it reads LFMALGFTIGGTGGAMIALVV. His130 provides a ligand contact to Zn(2+). Glu131 is a catalytic residue. Residue His134 participates in Zn(2+) binding. The next 2 helical transmembrane spans lie at 145–165 and 174–194; these read MTAT…FFGA and LATI…QMAI. Glu199 is a Zn(2+) binding site. The disordered stretch occupies residues 285–316; that stretch reads PNFAALSERRGSVSSVPRTRRRSSALDPNGRG.

Belongs to the peptidase M48B family. Zn(2+) is required as a cofactor.

The protein resides in the cell inner membrane. This Rhizorhabdus wittichii (strain DSM 6014 / CCUG 31198 / JCM 15750 / NBRC 105917 / EY 4224 / RW1) (Sphingomonas wittichii) protein is Protease HtpX homolog.